Reading from the N-terminus, the 216-residue chain is Gas vesicle protein H (216 aa).

The segment at 1 to 141 is disordered; that stretch reads MSPNLNGPGG…IHIETRETDD (141 aa). Residues 15-25 are compositionally biased toward acidic residues; that stretch reads DRPDEPDDSDR. Composition is skewed to basic and acidic residues over residues 38 to 51, 73 to 84, and 107 to 141; these read PDDR…RPSD, DGHRQGHGRIDR, and KPSD…ETDD.

The protein belongs to the gas vesicle GvpH family. In terms of assembly, gvpF to GvpM interact with each other in vitro, and may form multi-subunit complex(es). Interacts with GvpC. Might interact with GvpA.

Its subcellular location is the gas vesicle. Its function is as follows. Proteins GvpF to GvpM might be involved in nucleating gas vesicle formation. A minor component of the gas vesicle. Gas vesicles are hollow, gas filled proteinaceous nanostructures found in some microorganisms. They allow positioning of halobacteria at the optimal depth for growth in the poorly aerated, shallow brine pools of their habitat. Expression of a 9.5 kb mc-vac DNA fragment containing 2 divergently transcribed regions (gvpD-gvpE-gvpF-gvpG-gvpH-gvpI-gvpJ-gvpK-gvpL-gvpM and gvpA-gvpC-gvpN-gvpO) allows H.volcanii to produce gas vesicles. The polypeptide is Gas vesicle protein H (Haloferax mediterranei (strain ATCC 33500 / DSM 1411 / JCM 8866 / NBRC 14739 / NCIMB 2177 / R-4) (Halobacterium mediterranei)).